A 117-amino-acid chain; its full sequence is MACSVHLVLFLTILLSLAETPESAPAHRGRGGWTLNSAGYLLGPVLPVSSKADQGRKRDSALEILDLWKIIDGLPYSHSPRMTKRTMGETFVKANTGDMHILDKNVPKEEATLDSES.

Positions 1 to 23 are cleaved as a signal peptide; sequence MACSVHLVLFLTILLSLAETPES. A propeptide spanning residues 86–117 is cleaved from the precursor; it reads TMGETFVKANTGDMHILDKNVPKEEATLDSES.

This sequence belongs to the galanin family. In terms of tissue distribution, isoform 2 is found in brain, thymus and skin. Isoform 2 is found in the skin, in pericytes covering microvascular arterioles and venules on their abluminal surfaces. In larger vessels, isoform 2 is expressed in layers of smooth muscle cells. Isoform 2 is not detected in endothelial cells.

The protein resides in the secreted. In terms of biological role, hypothalamic neuropeptide which binds to the G-protein-coupled galanin receptors (GALR1, GALR2 and GALR3). Involved in a large number of putative physiological functions in CNS homeostatic processes, including the regulation of gonadotropin-releasing hormone secretion. Functionally, exhibits antimicrobial activity against Gram-negative bacterias, inducing bacterial membrane blebbing. Exhibits potent and dose-dependent vasoconstrictor and anti-edema activity in the cutaneous microvasculature, a physiologic effects which does not appear to be mediated via GALR1 or GALR2. This is Galanin-like peptide (Galp) from Mus musculus (Mouse).